The primary structure comprises 1093 residues: Protein transport protein Sec24A (1093 aa).

Disordered stretches follow at residues 1–29 (MSQP…SGSP), 60–168 (HPIP…TSLT), 189–226 (GPSV…ALTP), and 294–328 (SLPP…TQTP). Polar residues-rich tracts occupy residues 112–126 (ASQN…SSSF) and 138–168 (WQYN…TSLT). Pro residues-rich tracts occupy residues 191–201 (SVPPLVNPPLP) and 209–221 (PHGP…PPPV). Positions 299–328 (YQNTTPPGATGVPPSSLNYPSGPQAFTQTP) are enriched in polar residues. The Zn(2+) site is built by Cys-431, Cys-434, Cys-452, and Cys-455. Positions 431 to 455 (CRSCRTYINPFVSFLDQRRWKCNLC) are zinc finger-like. Residues 966-1038 (PQPPILQLSV…TPESARIIAF (73 aa)) form a Gelsolin-like repeat.

This sequence belongs to the SEC23/SEC24 family. SEC24 subfamily. As to quaternary structure, COPII is composed of at least five proteins: the Sec23/24 complex, the Sec13/31 complex and Sar1. Interacts with TMED2. Interacts (as part of the Sec23/24 complex) with SEC22B; recruits SEC22B into COPII-coated vesicles for its transport from the endoplasmic reticulum to the Golgi. Interacts with STING1; promoting STING1 translocation to COPII vesicles in a STEEP1-dependent manner. Interacts with TMEM39A. Interacts with SACM1L; this interaction is reduced in the absence of TMEM39A. Interacts with kinase FAM20C; transport of FAM20C from the endoplasmic reticulum to the Golgi is likely to be mediated by COPII vesicles.

It is found in the cytoplasmic vesicle. Its subcellular location is the COPII-coated vesicle membrane. It localises to the endoplasmic reticulum membrane. The protein localises to the cytoplasm. The protein resides in the cytosol. Its function is as follows. Component of the coat protein complex II (COPII) which promotes the formation of transport vesicles from the endoplasmic reticulum (ER). The coat has two main functions, the physical deformation of the endoplasmic reticulum membrane into vesicles and the selection of cargo molecules for their transport to the Golgi complex. Plays a central role in cargo selection within the COPII complex and together with SEC24B may have a different specificity compared to SEC24C and SEC24D. May package preferentially cargos with cytoplasmic DxE or LxxLE motifs and may also recognize conformational epitopes. The sequence is that of Protein transport protein Sec24A from Homo sapiens (Human).